Here is a 75-residue protein sequence, read N- to C-terminus: Gas vesicle protein S (75 aa).

Belongs to the gas vesicle GvpA family.

It is found in the gas vesicle. Functionally, probably a minor component of the gas vesicle. Gas vesicles are hollow, gas filled proteinaceous nanostructures found in some microorganisms. It is not clear what function gas vesicles perform in soil bacteria. The protein is Gas vesicle protein S of Streptomyces sp. (strain CB03234).